Consider the following 367-residue polypeptide: Germination protease (367 aa).

The propeptide occupies 1–15 (MKEPLDLSKYSVRTD).

It belongs to the peptidase A25 family. As to quaternary structure, homotetramer. In terms of processing, autoproteolytically processed. The inactive tetrameric zymogen termed p46 autoprocesses to a smaller form termed p41, which is active only during spore germination.

The enzyme catalyses Endopeptidase action with P4 Glu or Asp, P1 preferably Glu &gt; Asp, P1' hydrophobic and P2' Ala.. Its function is as follows. Initiates the rapid degradation of small, acid-soluble proteins during spore germination. This Bacillus cereus (strain G9842) protein is Germination protease.